A 380-amino-acid chain; its full sequence is Cytochrome b (380 aa).

A run of 4 helical transmembrane segments spans residues 34 to 54, 78 to 99, 114 to 134, and 179 to 199; these read FGSL…LLAM, WLIR…YLHI, WNTG…GYVL, and FFAL…IHLT. The heme b site is built by His-84 and His-98. Heme b contacts are provided by His-183 and His-197. An a ubiquinone-binding site is contributed by His-202. 4 consecutive transmembrane segments (helical) span residues 227-247, 289-309, 321-341, and 348-368; these read TKDT…ALFS, LGGV…PLLH, LSQL…WIGS, and FIII…ILFP.

This sequence belongs to the cytochrome b family. As to quaternary structure, the cytochrome bc1 complex contains 11 subunits: 3 respiratory subunits (MT-CYB, CYC1 and UQCRFS1), 2 core proteins (UQCRC1 and UQCRC2) and 6 low-molecular weight proteins (UQCRH/QCR6, UQCRB/QCR7, UQCRQ/QCR8, UQCR10/QCR9, UQCR11/QCR10 and a cleavage product of UQCRFS1). This cytochrome bc1 complex then forms a dimer. Heme b serves as cofactor.

The protein localises to the mitochondrion inner membrane. Component of the ubiquinol-cytochrome c reductase complex (complex III or cytochrome b-c1 complex) that is part of the mitochondrial respiratory chain. The b-c1 complex mediates electron transfer from ubiquinol to cytochrome c. Contributes to the generation of a proton gradient across the mitochondrial membrane that is then used for ATP synthesis. This is Cytochrome b (MT-CYB) from Aptenodytes patagonicus (King penguin).